The primary structure comprises 230 residues: tRNA (cytidine-2'-O-)-methyltransferase TrmJ (230 aa).

S-adenosyl-L-methionine contacts are provided by residues 79–81, G115, I135, and 142–144; these read TSG and PIM.

This sequence belongs to the class IV-like SAM-binding methyltransferase superfamily. RNA methyltransferase TrmH family. In terms of assembly, homodimer.

It is found in the cytoplasm. It catalyses the reaction cytidine(32) in tRNA + S-adenosyl-L-methionine = 2'-O-methylcytidine(32) in tRNA + S-adenosyl-L-homocysteine + H(+). Its function is as follows. Catalyzes the formation of 2'O-methylated cytidine (Cm32) at position 32 in tRNA. In Methanocaldococcus jannaschii (strain ATCC 43067 / DSM 2661 / JAL-1 / JCM 10045 / NBRC 100440) (Methanococcus jannaschii), this protein is tRNA (cytidine-2'-O-)-methyltransferase TrmJ.